Reading from the N-terminus, the 411-residue chain is Na(+)-translocating NADH-quinone reductase subunit F (411 aa).

The helical transmembrane segment at 5-25 (VILALGIAAFTVIVLVLVAII) threads the bilayer. Residues 36-130 (GDITIDINDD…NMEVELPEEI (95 aa)) form the 2Fe-2S ferredoxin-type domain. 4 residues coordinate [2Fe-2S] cluster: Cys73, Cys79, Cys82, and Cys114. An FAD-binding FR-type domain is found at 133–273 (VKKWECTVIS…SGPFGEFFAK (141 aa)).

The protein belongs to the NqrF family. Composed of six subunits; NqrA, NqrB, NqrC, NqrD, NqrE and NqrF. It depends on [2Fe-2S] cluster as a cofactor. FAD serves as cofactor.

It is found in the cell inner membrane. The enzyme catalyses a ubiquinone + n Na(+)(in) + NADH + H(+) = a ubiquinol + n Na(+)(out) + NAD(+). Functionally, NQR complex catalyzes the reduction of ubiquinone-1 to ubiquinol by two successive reactions, coupled with the transport of Na(+) ions from the cytoplasm to the periplasm. The first step is catalyzed by NqrF, which accepts electrons from NADH and reduces ubiquinone-1 to ubisemiquinone by a one-electron transfer pathway. This Haemophilus influenzae (strain 86-028NP) protein is Na(+)-translocating NADH-quinone reductase subunit F.